A 106-amino-acid chain; its full sequence is Small ribosomal subunit protein uS10 (106 aa).

The protein belongs to the universal ribosomal protein uS10 family. In terms of assembly, part of the 30S ribosomal subunit.

In terms of biological role, involved in the binding of tRNA to the ribosomes. The chain is Small ribosomal subunit protein uS10 from Wolbachia sp. subsp. Drosophila simulans (strain wRi).